The chain runs to 321 residues: Tetraacyldisaccharide 4'-kinase (321 aa).

Residue 54-61 (SVGGTGKT) coordinates ATP.

This sequence belongs to the LpxK family.

It catalyses the reaction a lipid A disaccharide + ATP = a lipid IVA + ADP + H(+). It functions in the pathway glycolipid biosynthesis; lipid IV(A) biosynthesis; lipid IV(A) from (3R)-3-hydroxytetradecanoyl-[acyl-carrier-protein] and UDP-N-acetyl-alpha-D-glucosamine: step 6/6. In terms of biological role, transfers the gamma-phosphate of ATP to the 4'-position of a tetraacyldisaccharide 1-phosphate intermediate (termed DS-1-P) to form tetraacyldisaccharide 1,4'-bis-phosphate (lipid IVA). This Rickettsia bellii (strain OSU 85-389) protein is Tetraacyldisaccharide 4'-kinase.